The sequence spans 365 residues: Carbamoyl phosphate synthase small chain (365 aa).

CPSase stretches follow at residues 1 to 166 and 1 to 169; these read MKRQ…PSPG and MKRQ…GRGH. Residues S45, G218, and G220 each coordinate L-glutamine. A Glutamine amidotransferase type-1 domain is found at 170-357; the sequence is RVVLVDFGMK…LTMIENFKKE (188 aa). C245 serves as the catalytic Nucleophile. L-glutamine contacts are provided by L246, Q249, N287, G289, and Y290. Active-site residues include H330 and E332.

The protein belongs to the CarA family. As to quaternary structure, composed of two chains; the small (or glutamine) chain promotes the hydrolysis of glutamine to ammonia, which is used by the large (or ammonia) chain to synthesize carbamoyl phosphate. Tetramer of heterodimers (alpha,beta)4.

The enzyme catalyses hydrogencarbonate + L-glutamine + 2 ATP + H2O = carbamoyl phosphate + L-glutamate + 2 ADP + phosphate + 2 H(+). It catalyses the reaction L-glutamine + H2O = L-glutamate + NH4(+). The protein operates within amino-acid biosynthesis; L-arginine biosynthesis; carbamoyl phosphate from bicarbonate: step 1/1. Its pathway is pyrimidine metabolism; UMP biosynthesis via de novo pathway; (S)-dihydroorotate from bicarbonate: step 1/3. Small subunit of the glutamine-dependent carbamoyl phosphate synthetase (CPSase). CPSase catalyzes the formation of carbamoyl phosphate from the ammonia moiety of glutamine, carbonate, and phosphate donated by ATP, constituting the first step of 2 biosynthetic pathways, one leading to arginine and/or urea and the other to pyrimidine nucleotides. The small subunit (glutamine amidotransferase) binds and cleaves glutamine to supply the large subunit with the substrate ammonia. This is Carbamoyl phosphate synthase small chain from Bacillus cereus (strain ATCC 14579 / DSM 31 / CCUG 7414 / JCM 2152 / NBRC 15305 / NCIMB 9373 / NCTC 2599 / NRRL B-3711).